We begin with the raw amino-acid sequence, 219 residues long: 7-cyano-7-deazaguanine synthase (219 aa).

Position 10–20 (10–20 (FSGGQDSTTCL)) interacts with ATP. Residues Cys-188, Cys-197, Cys-200, and Cys-203 each coordinate Zn(2+).

This sequence belongs to the QueC family. Homodimer. Zn(2+) serves as cofactor.

The enzyme catalyses 7-carboxy-7-deazaguanine + NH4(+) + ATP = 7-cyano-7-deazaguanine + ADP + phosphate + H2O + H(+). It functions in the pathway purine metabolism; 7-cyano-7-deazaguanine biosynthesis. In terms of biological role, catalyzes the ATP-dependent conversion of 7-carboxy-7-deazaguanine (CDG) to 7-cyano-7-deazaguanine (preQ(0)). This chain is 7-cyano-7-deazaguanine synthase, found in Clostridium botulinum (strain Loch Maree / Type A3).